We begin with the raw amino-acid sequence, 218 residues long: Guanylate kinase (218 aa).

The Guanylate kinase-like domain maps to 14 to 193; the sequence is GLMLVLSSPS…AFAEVRGIVV (180 aa). 21–28 is a binding site for ATP; sequence SPSGAGKS.

This sequence belongs to the guanylate kinase family.

It localises to the cytoplasm. It catalyses the reaction GMP + ATP = GDP + ADP. In terms of biological role, essential for recycling GMP and indirectly, cGMP. The polypeptide is Guanylate kinase (gmk) (Mesorhizobium japonicum (strain LMG 29417 / CECT 9101 / MAFF 303099) (Mesorhizobium loti (strain MAFF 303099))).